A 122-amino-acid polypeptide reads, in one-letter code: Large ribosomal subunit protein uL14 (122 aa).

This sequence belongs to the universal ribosomal protein uL14 family. In terms of assembly, part of the 50S ribosomal subunit. Forms a cluster with proteins L3 and L19. In the 70S ribosome, L14 and L19 interact and together make contacts with the 16S rRNA in bridges B5 and B8.

In terms of biological role, binds to 23S rRNA. Forms part of two intersubunit bridges in the 70S ribosome. The chain is Large ribosomal subunit protein uL14 from Prosthecochloris aestuarii (strain DSM 271 / SK 413).